Consider the following 208-residue polypeptide: UPF0637 protein BCB4264_A4063 (208 aa).

This sequence belongs to the UPF0637 family.

This Bacillus cereus (strain B4264) protein is UPF0637 protein BCB4264_A4063.